A 311-amino-acid polypeptide reads, in one-letter code: Lipid A biosynthesis acyltransferase (311 aa).

The chain crosses the membrane as a helical span at residues 19–39 (WLFWLGVAIWRSILCLPYPIL). Positions 134-139 (HFLTLE) match the HXXXXD motif motif.

This sequence belongs to the LpxL/LpxM/LpxP family.

The protein resides in the cell inner membrane. The catalysed reaction is an alpha-Kdo-(2-&gt;4)-alpha-Kdo-(2-&gt;6)-lipid IVA + a fatty acyl-[ACP] = an alpha-Kdo-(2-&gt;4)-alpha-Kdo-(2-&gt;6)-(acyl)-lipid IVA + holo-[ACP]. It functions in the pathway glycolipid biosynthesis; KDO(2)-lipid A biosynthesis; KDO(2)-lipid A from CMP-3-deoxy-D-manno-octulosonate and lipid IV(A): step 3/4. Its pathway is bacterial outer membrane biogenesis; lipopolysaccharide biosynthesis. Its function is as follows. Catalyzes the transfer of an acyl chain from an acyl-[acyl-carrier-protein] (ACP) to a Kdo(2)-lipid IV(A) to form a Kdo(2)-(acyl)-lipid IV(A). The polypeptide is Lipid A biosynthesis acyltransferase (Haemophilus influenzae (strain ATCC 51907 / DSM 11121 / KW20 / Rd)).